The chain runs to 197 residues: Protein FAM219B (197 aa).

Disordered regions lie at residues 1-77 and 117-142; these read MATE…HRDH and DENL…YSSA. Phosphoserine occurs at positions 14, 125, and 127.

This sequence belongs to the FAM219 family.

The sequence is that of Protein FAM219B (Fam219b) from Mus musculus (Mouse).